The chain runs to 61 residues: UPF0434 protein PSPTO_3844 (61 aa).

Belongs to the UPF0434 family.

This is UPF0434 protein PSPTO_3844 from Pseudomonas syringae pv. tomato (strain ATCC BAA-871 / DC3000).